Here is a 368-residue protein sequence, read N- to C-terminus: Nucleotide pyrophosphatase/phosphodiesterase (368 aa).

The protein belongs to the metallophosphoesterase superfamily. As to quaternary structure, monomer and homomer. Post-translationally, glycosylated.

The protein localises to the plastid. It localises to the chloroplast. Functionally, hydrolyzes pyrophosphate, phosphodiester and phosphosulfate linkages of nucleotide-sugars, sulfonucleotides and nucleoside di and triphosphates. Highest activity observed with the substrates ADP-glucose and adenosine 5'-phosphosulfate. This is Nucleotide pyrophosphatase/phosphodiesterase from Hordeum vulgare (Barley).